The chain runs to 160 residues: Sperm acrosome-associated protein 5 (160 aa).

The signal sequence occupies residues 1–21 (MKVCSIVVVILAVLLIAKLDA). One can recognise a C-type lysozyme domain in the interval 22-150 (KIYERCELAK…SEWLKGCSVR (129 aa)). Intrachain disulfides connect Cys27–Cys147, Cys51–Cys135, Cys85–Cys100, and Cys96–Cys114. Glu56 is a catalytic residue.

The protein belongs to the glycosyl hydrolase 22 family.

It is found in the secreted. The catalysed reaction is Hydrolysis of (1-&gt;4)-beta-linkages between N-acetylmuramic acid and N-acetyl-D-glucosamine residues in a peptidoglycan and between N-acetyl-D-glucosamine residues in chitodextrins.. The protein is Sperm acrosome-associated protein 5 (Spaca5) of Mus musculus (Mouse).